The primary structure comprises 305 residues: Methionyl-tRNA formyltransferase (305 aa).

Residue Ser-110–Pro-113 participates in (6S)-5,6,7,8-tetrahydrofolate binding.

Belongs to the Fmt family.

The enzyme catalyses L-methionyl-tRNA(fMet) + (6R)-10-formyltetrahydrofolate = N-formyl-L-methionyl-tRNA(fMet) + (6S)-5,6,7,8-tetrahydrofolate + H(+). Its function is as follows. Attaches a formyl group to the free amino group of methionyl-tRNA(fMet). The formyl group appears to play a dual role in the initiator identity of N-formylmethionyl-tRNA by promoting its recognition by IF2 and preventing the misappropriation of this tRNA by the elongation apparatus. This is Methionyl-tRNA formyltransferase from Gluconacetobacter diazotrophicus (strain ATCC 49037 / DSM 5601 / CCUG 37298 / CIP 103539 / LMG 7603 / PAl5).